The sequence spans 208 residues: Sodium/potassium-transporting ATPase subunit beta-1-interacting protein 4 (208 aa).

3 consecutive transmembrane segments (helical) span residues 35-55 (APIL…FGTI), 62-82 (VMVY…IICF), and 151-171 (CLQI…VSVF).

It belongs to the NKAIN family. As to quaternary structure, interacts with ATP1B1.

Its subcellular location is the cell membrane. This chain is Sodium/potassium-transporting ATPase subunit beta-1-interacting protein 4 (NKAIN4), found in Homo sapiens (Human).